The chain runs to 420 residues: MAPK/MAK/MRK overlapping kinase (420 aa).

Residues 4 to 285 form the Protein kinase domain; sequence YKAIGKIGEG…AHQALQHPYF (282 aa). ATP-binding positions include 10–18 and Lys33; that span reads IGEGTFSEV. Asp128 functions as the Proton acceptor in the catalytic mechanism. Positions 311–322 are enriched in polar residues; it reads PESSSHNWSFSQ. Positions 311 to 344 are disordered; that stretch reads PESSSHNWSFSQEGRKQKQSLRHEEGHARRQGPT. Over residues 323 to 338 the composition is skewed to basic and acidic residues; sequence EGRKQKQSLRHEEGHA.

This sequence belongs to the protein kinase superfamily. CMGC Ser/Thr protein kinase family. CDC2/CDKX subfamily. Mg(2+) serves as cofactor. In terms of processing, autophosphorylated. Highly expressed in testis, and less in kidney, brain and lung.

Its subcellular location is the cytoplasm. It is found in the cell projection. The protein localises to the cilium. The protein resides in the nucleus. The catalysed reaction is L-seryl-[protein] + ATP = O-phospho-L-seryl-[protein] + ADP + H(+). The enzyme catalyses L-threonyl-[protein] + ATP = O-phospho-L-threonyl-[protein] + ADP + H(+). With respect to regulation, phosphorylation appears to increase the enzymatic activity. Able to phosphorylate several exogenous substrates and to undergo autophosphorylation. Negatively regulates cilium length in a cAMP and mTORC1 signaling-dependent manner. The protein is MAPK/MAK/MRK overlapping kinase (Mok) of Mus musculus (Mouse).